We begin with the raw amino-acid sequence, 660 residues long: RalBP1-associated Eps domain-containing protein 2 (660 aa).

The region spanning 34–147 (EQQCYSELFA…RFMMSKNDGE (114 aa)) is the EH 1 domain. A disordered region spans residues 169–208 (EKNSFKRMDDEDKQQETQSPTMSPLASPPSSPPHYQRVPL). Residue S254 is modified to Phosphoserine. Positions 282–373 (QREYYVNQFR…LQPEYLQAAF (92 aa)) constitute an EH 2 domain. Positions 315 to 350 (LSIPELSYIWELSDADCDGALTLPEFCAAFHLIVAR) constitute an EF-hand domain. Ca(2+)-binding residues include D328, D330, D332, and E339. A disordered region spans residues 433–616 (NEALPKDVSE…KQKKAIQTAI (184 aa)). T479 carries the post-translational modification Phosphothreonine. S493 bears the Phosphoserine mark. A compositionally biased stretch (pro residues) spans 512 to 523 (LPPPPALPPRPC). The tract at residues 514 to 660 (PPPALPPRPC…LEQLRPVTVL (147 aa)) is interaction with RALBP1. An interaction with ASAP1 region spans residues 561 to 660 (PPSKPIRRKF…LEQLRPVTVL (100 aa)). Residues 582–594 (PSTAASGPASAAT) are compositionally biased toward low complexity. Residues 601–657 (VQKQSSKQKKAIQTAIRKNKEANAVLARLNSELQQQLKEVHQERIALENQLEQLRPV) are a coiled coil.

As to quaternary structure, interacts with EPN1; the interaction is direct. Interacts with EPS15; the interaction is direct. Interacts with EPS15L1. Interacts with RALBP1; can form a ternary complex with activated Ral (RALA or RALB). Interacts with ASAP1; the interaction is direct and this complex can bind paxillin. Also forms a ternary complex with RALBP1 and ASAP1. Interacts with GRB2. Post-translationally, tyrosine-phosphorylated upon stimulation of cells with EGF. Phosphorylation on Tyr-residues induces its association with the EGF receptor probably indirectly through an adapter like GRB2. Expressed at high levels in the cerebrum, cerebellum, lung, kidney, and testis. Weakly expressed in the kidney. Isoform 2 is down-regulated during progression of prostate cancer.

The protein localises to the cytoplasm. Functionally, involved in ligand-dependent receptor mediated endocytosis of the EGF and insulin receptors as part of the Ral signaling pathway. By controlling growth factor receptors endocytosis may regulate cell survival. Through ASAP1 may regulate cell adhesion and migration. The chain is RalBP1-associated Eps domain-containing protein 2 (REPS2) from Homo sapiens (Human).